Consider the following 578-residue polypeptide: Sulfite reductase [NADPH] hemoprotein beta-component (578 aa).

[4Fe-4S] cluster is bound by residues C441, C447, C487, and C491. Residue C491 participates in siroheme binding.

It belongs to the nitrite and sulfite reductase 4Fe-4S domain family. In terms of assembly, alpha(8)-beta(8). The alpha component is a flavoprotein, the beta component is a hemoprotein. The cofactor is siroheme. [4Fe-4S] cluster serves as cofactor.

It carries out the reaction hydrogen sulfide + 3 NADP(+) + 3 H2O = sulfite + 3 NADPH + 4 H(+). Its pathway is sulfur metabolism; hydrogen sulfide biosynthesis; hydrogen sulfide from sulfite (NADPH route): step 1/1. In terms of biological role, component of the sulfite reductase complex that catalyzes the 6-electron reduction of sulfite to sulfide. This is one of several activities required for the biosynthesis of L-cysteine from sulfate. This chain is Sulfite reductase [NADPH] hemoprotein beta-component, found in Vibrio parahaemolyticus serotype O3:K6 (strain RIMD 2210633).